The primary structure comprises 377 residues: Ribosomal RNA large subunit methyltransferase G (377 aa).

The protein belongs to the methyltransferase superfamily. RlmG family.

The protein resides in the cytoplasm. The catalysed reaction is guanosine(1835) in 23S rRNA + S-adenosyl-L-methionine = N(2)-methylguanosine(1835) in 23S rRNA + S-adenosyl-L-homocysteine + H(+). Functionally, specifically methylates the guanine in position 1835 (m2G1835) of 23S rRNA. In Shewanella sp. (strain ANA-3), this protein is Ribosomal RNA large subunit methyltransferase G.